The chain runs to 198 residues: Probable GTP-binding protein EngB (198 aa).

The region spanning 22–197 (TLPEYAFIGR…LDYIEGINNS (176 aa)) is the EngB-type G domain. Residues 30–37 (GRSNVGKS), 57–61 (GKTQL), 75–78 (DLPG), 142–145 (TKAD), and 175–178 (ITSA) contribute to the GTP site. Mg(2+) is bound by residues serine 37 and threonine 59.

This sequence belongs to the TRAFAC class TrmE-Era-EngA-EngB-Septin-like GTPase superfamily. EngB GTPase family. The cofactor is Mg(2+).

Functionally, necessary for normal cell division and for the maintenance of normal septation. The polypeptide is Probable GTP-binding protein EngB (Christiangramia forsetii (strain DSM 17595 / CGMCC 1.15422 / KT0803) (Gramella forsetii)).